The primary structure comprises 723 residues: Threonine--tRNA ligase, mitochondrial (723 aa).

At serine 57 the chain carries Phosphoserine. In terms of domain architecture, TGS spans 64–126 (RTIKISLPEG…ETDCHLRFLT (63 aa)).

The protein belongs to the class-II aminoacyl-tRNA synthetase family. As to quaternary structure, homodimer.

The protein localises to the mitochondrion matrix. It carries out the reaction tRNA(Thr) + L-threonine + ATP = L-threonyl-tRNA(Thr) + AMP + diphosphate + H(+). Its function is as follows. Catalyzes the attachment of threonine to tRNA(Thr) in a two-step reaction: threonine is first activated by ATP to form Thr-AMP and then transferred to the acceptor end of tRNA(Thr). Also edits incorrectly charged tRNA(Thr) via its editing domain. This Rattus norvegicus (Rat) protein is Threonine--tRNA ligase, mitochondrial (Tars2).